A 575-amino-acid chain; its full sequence is V-type ATP synthase alpha chain (575 aa).

An ATP-binding site is contributed by 238–245 (GPFGAGKT).

This sequence belongs to the ATPase alpha/beta chains family.

It carries out the reaction ATP + H2O + 4 H(+)(in) = ADP + phosphate + 5 H(+)(out). Produces ATP from ADP in the presence of a proton gradient across the membrane. The V-type alpha chain is a catalytic subunit. This chain is V-type ATP synthase alpha chain, found in Borrelia garinii subsp. bavariensis (strain ATCC BAA-2496 / DSM 23469 / PBi) (Borreliella bavariensis).